Reading from the N-terminus, the 377-residue chain is UPF0754 membrane protein LMOf2365_2257 (377 aa).

Transmembrane regions (helical) follow at residues 1–21 and 357–377; these read MSVL…GAMT and YLGG…AMWI.

It belongs to the UPF0754 family.

The protein localises to the cell membrane. The protein is UPF0754 membrane protein LMOf2365_2257 of Listeria monocytogenes serotype 4b (strain F2365).